Consider the following 176-residue polypeptide: Peptide deformylase (176 aa).

The Fe cation site is built by C97 and H139. The active site involves E140. H143 lines the Fe cation pocket.

The protein belongs to the polypeptide deformylase family. Fe(2+) is required as a cofactor.

It carries out the reaction N-terminal N-formyl-L-methionyl-[peptide] + H2O = N-terminal L-methionyl-[peptide] + formate. Removes the formyl group from the N-terminal Met of newly synthesized proteins. Requires at least a dipeptide for an efficient rate of reaction. N-terminal L-methionine is a prerequisite for activity but the enzyme has broad specificity at other positions. This is Peptide deformylase from Thermomicrobium roseum (strain ATCC 27502 / DSM 5159 / P-2).